The chain runs to 117 residues: Immunoglobulin kappa variable 1-9 (117 aa).

The first 22 residues, 1-22 (MDMRVPAQLLGLLLLWLPGARC), serve as a signal peptide directing secretion. The tract at residues 23 to 45 (DIQLTQSPSFLSASVGDRVTITC) is framework-1. An Ig-like domain is found at 24 to 117 (IQLTQSPSFL…YYCQQLNSYP (94 aa)). Residues Cys-45 and Cys-110 are joined by a disulfide bond. The segment at 46 to 56 (RASQGISSYLA) is complementarity-determining-1. The tract at residues 57–71 (WYQQKPGKAPKLLIY) is framework-2. The segment at 72–78 (AASTLQS) is complementarity-determining-2. The framework-3 stretch occupies residues 79–110 (GVPSRFSGSGSGTEFTLTISSLQPEDFATYYC). The tract at residues 111 to 117 (QQLNSYP) is complementarity-determining-3.

As to quaternary structure, immunoglobulins are composed of two identical heavy chains and two identical light chains; disulfide-linked.

It localises to the secreted. The protein resides in the cell membrane. V region of the variable domain of immunoglobulin light chains that participates in the antigen recognition. Immunoglobulins, also known as antibodies, are membrane-bound or secreted glycoproteins produced by B lymphocytes. In the recognition phase of humoral immunity, the membrane-bound immunoglobulins serve as receptors which, upon binding of a specific antigen, trigger the clonal expansion and differentiation of B lymphocytes into immunoglobulins-secreting plasma cells. Secreted immunoglobulins mediate the effector phase of humoral immunity, which results in the elimination of bound antigens. The antigen binding site is formed by the variable domain of one heavy chain, together with that of its associated light chain. Thus, each immunoglobulin has two antigen binding sites with remarkable affinity for a particular antigen. The variable domains are assembled by a process called V-(D)-J rearrangement and can then be subjected to somatic hypermutations which, after exposure to antigen and selection, allow affinity maturation for a particular antigen. This Homo sapiens (Human) protein is Immunoglobulin kappa variable 1-9.